The following is a 304-amino-acid chain: Probable 5-dehydro-4-deoxyglucarate dehydratase (304 aa).

This sequence belongs to the DapA family.

It carries out the reaction 5-dehydro-4-deoxy-D-glucarate + H(+) = 2,5-dioxopentanoate + CO2 + H2O. It functions in the pathway carbohydrate acid metabolism; D-glucarate degradation; 2,5-dioxopentanoate from D-glucarate: step 2/2. The chain is Probable 5-dehydro-4-deoxyglucarate dehydratase from Pseudarthrobacter chlorophenolicus (strain ATCC 700700 / DSM 12829 / CIP 107037 / JCM 12360 / KCTC 9906 / NCIMB 13794 / A6) (Arthrobacter chlorophenolicus).